A 581-amino-acid polypeptide reads, in one-letter code: Tail sheath protein (581 aa).

This sequence belongs to the myoviridae tail sheath protein family. As to quaternary structure, homomultimer.

It is found in the virion. The protein localises to the host cytoplasm. Polymerizes as an extended structure around the baseplate-tail tube complex. During ejection, the sheath shifts to a contracted form, thereby making the inner tail tube protrude through the host cell envelope. This chain is Tail sheath protein, found in Mycobacterium phage Bxz1 (Mycobacteriophage Bxz1).